The primary structure comprises 159 residues: Small ribosomal subunit protein uS7 (159 aa).

The protein belongs to the universal ribosomal protein uS7 family. As to quaternary structure, part of the 30S ribosomal subunit. Contacts proteins S9 and S11.

In terms of biological role, one of the primary rRNA binding proteins, it binds directly to 16S rRNA where it nucleates assembly of the head domain of the 30S subunit. Is located at the subunit interface close to the decoding center, probably blocks exit of the E-site tRNA. This chain is Small ribosomal subunit protein uS7, found in Endomicrobium trichonymphae.